The sequence spans 146 residues: Putative pre-16S rRNA nuclease (146 aa).

The protein belongs to the YqgF nuclease family.

It localises to the cytoplasm. In terms of biological role, could be a nuclease involved in processing of the 5'-end of pre-16S rRNA. The chain is Putative pre-16S rRNA nuclease from Methylobacillus flagellatus (strain ATCC 51484 / DSM 6875 / VKM B-1610 / KT).